A 419-amino-acid polypeptide reads, in one-letter code: Squamosa promoter-binding-like protein 2 (419 aa).

The tract at residues 77 to 96 is disordered; the sequence is SAEVRTHNFTSETGESLPGE. The segment at 166–243 adopts an SBP-type zinc-finger fold; sequence TPHCQVEGCN…SDHNARRRKP (78 aa). The Zn(2+) site is built by cysteine 169, cysteine 174, cysteine 191, histidine 194, cysteine 210, cysteine 213, histidine 217, and cysteine 229. The Bipartite nuclear localization signal motif lies at 226–242; it reads KRSCRRRLSDHNARRRK. The interval 230-249 is disordered; it reads RRRLSDHNARRRKPNPGRTY.

The cofactor is Zn(2+).

The protein localises to the nucleus. Its function is as follows. Trans-acting factor that binds specifically to the consensus nucleotide sequence 5'-TNCGTACAA-3'. This chain is Squamosa promoter-binding-like protein 2 (SPL2), found in Arabidopsis thaliana (Mouse-ear cress).